Reading from the N-terminus, the 303-residue chain is UDP-3-O-acyl-N-acetylglucosamine deacetylase (303 aa).

The Zn(2+) site is built by H78, H237, and D241. H264 acts as the Proton donor in catalysis.

This sequence belongs to the LpxC family. Requires Zn(2+) as cofactor.

The enzyme catalyses a UDP-3-O-[(3R)-3-hydroxyacyl]-N-acetyl-alpha-D-glucosamine + H2O = a UDP-3-O-[(3R)-3-hydroxyacyl]-alpha-D-glucosamine + acetate. It functions in the pathway glycolipid biosynthesis; lipid IV(A) biosynthesis; lipid IV(A) from (3R)-3-hydroxytetradecanoyl-[acyl-carrier-protein] and UDP-N-acetyl-alpha-D-glucosamine: step 2/6. Catalyzes the hydrolysis of UDP-3-O-myristoyl-N-acetylglucosamine to form UDP-3-O-myristoylglucosamine and acetate, the committed step in lipid A biosynthesis. This Xanthomonas campestris pv. campestris (strain 8004) protein is UDP-3-O-acyl-N-acetylglucosamine deacetylase.